Here is a 541-residue protein sequence, read N- to C-terminus: Eukaryotic translation initiation factor 3 subunit L (541 aa).

The 209-residue stretch at 308–516 (TFSDILLYIQ…IHIADTKVSH (209 aa)) folds into the PCI domain.

The protein belongs to the eIF-3 subunit L family. In terms of assembly, component of the eukaryotic translation initiation factor 3 (eIF-3) complex. The eIF-3 complex interacts with pix.

The protein localises to the cytoplasm. Functionally, component of the eukaryotic translation initiation factor 3 (eIF-3) complex, which is involved in protein synthesis of a specialized repertoire of mRNAs and, together with other initiation factors, stimulates binding of mRNA and methionyl-tRNAi to the 40S ribosome. The eIF-3 complex specifically targets and initiates translation of a subset of mRNAs involved in cell proliferation. The sequence is that of Eukaryotic translation initiation factor 3 subunit L from Drosophila persimilis (Fruit fly).